Consider the following 213-residue polypeptide: Flagellar transcriptional regulator FlhC (213 aa).

Zn(2+) is bound by residues C138, C141, C158, and C161.

This sequence belongs to the FlhC family. Heterohexamer composed of two FlhC and four FlhD subunits. Each FlhC binds a FlhD dimer, forming a heterotrimer, and a hexamer assembles by dimerization of two heterotrimers. Zn(2+) is required as a cofactor.

The protein localises to the cytoplasm. Functions in complex with FlhD as a master transcriptional regulator that regulates transcription of several flagellar and non-flagellar operons by binding to their promoter region. Activates expression of class 2 flagellar genes, including fliA, which is a flagellum-specific sigma factor that turns on the class 3 genes. Also regulates genes whose products function in a variety of physiological pathways. The sequence is that of Flagellar transcriptional regulator FlhC from Cupriavidus metallidurans (strain ATCC 43123 / DSM 2839 / NBRC 102507 / CH34) (Ralstonia metallidurans).